Consider the following 382-residue polypeptide: Adaptive-response sensory kinase SasA (382 aa).

A Histidine kinase domain is found at 160–382 (MLAHDLRSPL…CFHFTLPVYR (223 aa)). Residue His-163 is modified to Phosphohistidine; by autocatalysis.

In terms of assembly, homooligomerizes. Interacts with KaiC. Participates in the KaiABC clock complex, whose core is composed of a KaiC homohexamer, 6 KaiB and up to 6 KaiA dimers. SasA and KaiB(fs) compete to bind to KaiC.

The catalysed reaction is ATP + protein L-histidine = ADP + protein N-phospho-L-histidine.. Functionally, member of the two-component regulatory system SasA/RpaA involved in genome-wide circadian gene expression. One of several clock output pathways. Participates in the Kai clock protein complex, the main circadian regulator in cyanobacteria, via its interaction with KaiC. KaiC enhances the autophosphorylation activity of SasA, which then transfers its phosphate group to RpaA to activate it. In addition to its output function, recruits fold-shifted KaiB (KaiB(fs)) to KaiC to cooperatively form the KaiB(6):KaiC(6) complex (independent of SasA kinase activity). Required for robustness of the circadian rhythm of gene expression and is involved in clock output, also required for adaptation to light/dark cycles. The sequence is that of Adaptive-response sensory kinase SasA from Crocosphaera subtropica (strain ATCC 51142 / BH68) (Cyanothece sp. (strain ATCC 51142)).